Here is a 346-residue protein sequence, read N- to C-terminus: NADH-ubiquinone oxidoreductase chain 2 (346 aa).

10 helical membrane passes run 3–23 (PIIF…VMIS), 25–45 (HWLL…PIMM), 67–87 (SMLL…WTVM), 96–116 (MLMT…FWVP), 122–142 (IPLS…MSVL), 145–165 (IFPS…ILIG), 200–220 (TLLN…MFMA), 238–258 (IMTI…PLSG), 273–293 (NSII…YFYM), and 324–344 (FLPT…MLSV).

This sequence belongs to the complex I subunit 2 family. As to quaternary structure, core subunit of respiratory chain NADH dehydrogenase (Complex I) which is composed of 45 different subunits. Interacts with TMEM242.

It localises to the mitochondrion inner membrane. The enzyme catalyses a ubiquinone + NADH + 5 H(+)(in) = a ubiquinol + NAD(+) + 4 H(+)(out). Core subunit of the mitochondrial membrane respiratory chain NADH dehydrogenase (Complex I) which catalyzes electron transfer from NADH through the respiratory chain, using ubiquinone as an electron acceptor. Essential for the catalytic activity and assembly of complex I. In Bos mutus grunniens (Wild yak), this protein is NADH-ubiquinone oxidoreductase chain 2.